Here is a 91-residue protein sequence, read N- to C-terminus: Alpha-defensin-related sequence 12 (91 aa).

The signal sequence occupies residues 1–19; sequence MKKLVLLSAFVLLAFQVQA. The propeptide occupies 20 to 65; it reads DSIQNTDEEIKTEEQPGEENQAVSISFGDPEGYALQDAAIRRARRC. Repeat copies occupy residues 65-67, 68-70, 71-73, 74-76, 77-79, and 83-85. The tract at residues 65 to 88 is 6 X 3 AA tandem repeats of C-P-X; sequence CPPCPSCLSCPWCPRCLRCPMCKC.

Belongs to the alpha-defensin family. As to expression, paneth cells of the small bowel.

It is found in the secreted. In terms of biological role, apparent precursor of a secreted, cationic, proline- and cysteine-rich peptide that contains Cys-Pro-Xaa repeats. Unlike cryptdin, the proposed mature peptide region lacks the structural motif characteristic of defensins. It may have microbicidal activities. The sequence is that of Alpha-defensin-related sequence 12 (Defa-rs12) from Mus musculus (Mouse).